An 830-amino-acid polypeptide reads, in one-letter code: C-Jun-amino-terminal kinase-interacting protein 2 (830 aa).

Disordered stretches follow at residues 1–26, 44–354, 367–438, 452–504, and 539–574; these read MADR…PPQD, CGLG…ADSP, EGSS…PGPC, LWAT…GSTA, and GNDS…PDSP. Residues 77–105 show a composition bias toward acidic residues; it reads DFQEFEMIDDNEEEDDEEEEEEEEEEEDG. The JNK-binding domain (JBD) stretch occupies residues 111 to 278; the sequence is AGGGPGSQAL…RMISSISETE (168 aa). The span at 142–172 shows a compositional bias: polar residues; sequence LHLTTLGAQDSLNNNNGGFTSAPPSSWQETV. 2 stretches are compositionally biased toward low complexity: residues 176–190 and 218–227; these read PAQE…PLLP and ASSGGASPSS. The span at 233–249 shows a compositional bias: basic and acidic residues; the sequence is ADLRSHSSGGHEGRRSS. The tract at residues 242 to 504 is necessary for interaction with FGF13; the sequence is GHEGRRSSQE…PGSRTTGSTA (263 aa). Residues S257, S304, and S307 each carry the phosphoserine modification. Low complexity predominate over residues 271 to 307; the sequence is ISSISETELELSSDGGSSSGRSSHLTNSIEEASSPAS. Acidic residues predominate over residues 333–352; that stretch reads TNSEYESGSESEPDLSEDAD. Residues 427-437 show a composition bias toward low complexity; that stretch reads APRLGPAQPGP. 2 stretches are compositionally biased toward acidic residues: residues 471 to 490 and 541 to 555; these read SEEE…DAED and DSEE…EEEA. The 62-residue stretch at 610–671 folds into the SH3 domain; sequence EREQTHRAVF…PAFYAHAVPG (62 aa). One can recognise a PID domain in the interval 683–819; that stretch reads PCWVDRFDVQ…FLEYYQEHLA (137 aa).

It belongs to the JIP scaffold family. As to quaternary structure, forms homo- or heterooligomeric complexes. Binds specific components of the JNK signaling pathway namely JNK1, JNK2, JNK3, MAP2K7, MAP3K10, MAP3K11, MAP3K12 and MAPK13. Also binds the proline-rich domain-containing splice variant of apolipoprotein E receptor 2 (ApoER2). Binds the TPR motif-containing C-terminal of kinesin light chain. Binds the cytoplasmic tails of LRP1 and LRP2 (Megalin). Interacts with DCLK2. Interacts with FGF13; enables the interaction with MAPK13 and may regulate the MAPK8IP2 scaffolding activity. Interacts with TIAM1 and TIAM2. Interacts with SH3RF2. In terms of tissue distribution, highly expressed in brain. Expressed in all neurons. Also expressed in testis, primarily in the epididymal epidermis.

The protein localises to the cytoplasm. In terms of biological role, the JNK-interacting protein (JIP) group of scaffold proteins selectively mediates JNK signaling by aggregating specific components of the MAPK cascade to form a functional JNK signaling module. JIP2 inhibits IL1 beta-induced apoptosis in insulin-secreting cells. The sequence is that of C-Jun-amino-terminal kinase-interacting protein 2 (Mapk8ip2) from Mus musculus (Mouse).